A 422-amino-acid chain; its full sequence is MRDNIAKGITAGSNTQQTTYDPTRTEATLTTATTFALRRYDLAGRALYDLDFSKLNPQTPTRDQTGQITFNPFGGFGLSGAAPQQWNEVKDKVPVEVAQDPSNPYRFAVLLVPRSVVYYEQLQRGLALPNQGSSSGSGQQNTTIGAYGLKVKNAEADTAKSNEKLQGYESKSSNGSSSTSTTQRGGSSNENKVKALQVAVKKKSGSQGNSGDQGTEQVELESNDLANAPIKRGSNNNQQVQLKADDFGTAPSSSGSGTQDGTPTPWTPWLTTEQIHNDPAKFAASILILYDAPYARNRTAIDRVDHLDPKVMTANYPPSWRTPKWNHHGLWDWKARDVLLQTTGFFNPRRHPEWFDGGQTVADNEKTGFDVDNSENTKQGFQKEADSDKSAPIALPFEAYFANIGNLTWFEQALLVFGICLS.

3 disordered regions span residues 1 to 21 (MRDNIAKGITAGSNTQQTTYD), 158 to 218 (TAKS…TEQV), and 246 to 271 (DFGTAPSSSGSGTQDGTPTPWTPWLT). The segment covering 11–21 (AGSNTQQTTYD) has biased composition (polar residues). A compositionally biased stretch (low complexity) spans 170-199 (SKSSNGSSSTSTTQRGGSSNENKVKALQVA). Composition is skewed to polar residues over residues 205 to 216 (GSQGNSGDQGTE) and 250 to 261 (APSSSGSGTQDG). Over residues 262–271 (TPTPWTPWLT) the composition is skewed to low complexity.

Belongs to the adhesin P1 family.

This is an uncharacterized protein from Mycoplasma pneumoniae (strain ATCC 29342 / M129 / Subtype 1) (Mycoplasmoides pneumoniae).